A 2321-amino-acid chain; its full sequence is Neurogenic locus notch homolog protein 3 (2321 aa).

Positions 1-14 (MGPGARGRRRRRRP) are enriched in basic residues. The tract at residues 1-26 (MGPGARGRRRRRRPMSPPPPPPPVRA) is disordered. The N-terminal stretch at 1–39 (MGPGARGRRRRRRPMSPPPPPPPVRALPLLLLLAGPGAA) is a signal peptide. The segment covering 15–25 (MSPPPPPPPVR) has biased composition (pro residues). 3 EGF-like domains span residues 40–77 (APPC…ERCQ), 78–118 (LEDP…PDCS), and 119–156 (LPDP…RSCR). Topologically, residues 40 to 1643 (APPCLDGSPC…LEPPEPSVPL (1604 aa)) are extracellular. Disulfide bonds link cysteine 43/cysteine 55, cysteine 49/cysteine 65, cysteine 67/cysteine 76, cysteine 82/cysteine 93, cysteine 87/cysteine 106, cysteine 108/cysteine 117, cysteine 123/cysteine 134, cysteine 128/cysteine 144, cysteine 146/cysteine 155, cysteine 162/cysteine 174, cysteine 168/cysteine 183, cysteine 185/cysteine 194, cysteine 201/cysteine 212, cysteine 206/cysteine 222, cysteine 224/cysteine 233, cysteine 240/cysteine 251, cysteine 245/cysteine 260, cysteine 262/cysteine 271, cysteine 278/cysteine 291, cysteine 285/cysteine 300, cysteine 302/cysteine 311, cysteine 318/cysteine 329, cysteine 323/cysteine 338, cysteine 340/cysteine 349, cysteine 355/cysteine 366, cysteine 360/cysteine 377, cysteine 379/cysteine 388, cysteine 395/cysteine 408, cysteine 402/cysteine 417, cysteine 419/cysteine 428, cysteine 435/cysteine 446, cysteine 440/cysteine 455, cysteine 457/cysteine 466, cysteine 473/cysteine 484, cysteine 478/cysteine 493, cysteine 495/cysteine 504, cysteine 511/cysteine 522, cysteine 516/cysteine 531, cysteine 533/cysteine 542, cysteine 549/cysteine 559, cysteine 554/cysteine 568, cysteine 570/cysteine 579, cysteine 586/cysteine 597, cysteine 591/cysteine 606, cysteine 608/cysteine 617, cysteine 624/cysteine 634, cysteine 629/cysteine 643, cysteine 645/cysteine 654, cysteine 661/cysteine 672, cysteine 666/cysteine 681, cysteine 683/cysteine 692, cysteine 699/cysteine 709, cysteine 704/cysteine 718, cysteine 720/cysteine 729, cysteine 738/cysteine 749, cysteine 743/cysteine 758, cysteine 760/cysteine 769, cysteine 775/cysteine 786, cysteine 780/cysteine 796, cysteine 798/cysteine 807, cysteine 814/cysteine 826, cysteine 820/cysteine 835, cysteine 837/cysteine 846, cysteine 853/cysteine 864, cysteine 858/cysteine 873, cysteine 875/cysteine 884, cysteine 891/cysteine 901, cysteine 896/cysteine 910, cysteine 912/cysteine 921, cysteine 928/cysteine 939, cysteine 933/cysteine 948, cysteine 950/cysteine 959, cysteine 966/cysteine 977, cysteine 971/cysteine 986, cysteine 988/cysteine 997, cysteine 1004/cysteine 1015, cysteine 1009/cysteine 1022, cysteine 1024/cysteine 1033, cysteine 1040/cysteine 1061, cysteine 1055/cysteine 1070, cysteine 1072/cysteine 1081, cysteine 1088/cysteine 1099, cysteine 1093/cysteine 1108, cysteine 1110/cysteine 1119, cysteine 1126/cysteine 1137, cysteine 1131/cysteine 1146, cysteine 1148/cysteine 1157, cysteine 1164/cysteine 1182, cysteine 1176/cysteine 1191, cysteine 1193/cysteine 1202, cysteine 1209/cysteine 1222, cysteine 1214/cysteine 1232, cysteine 1234/cysteine 1243, cysteine 1250/cysteine 1261, cysteine 1255/cysteine 1275, cysteine 1277/cysteine 1286, cysteine 1293/cysteine 1304, cysteine 1298/cysteine 1313, and cysteine 1315/cysteine 1324. The EGF-like 4; calcium-binding domain occupies 158–195 (DVDECRVGEPCRHGGTCLNTPGSFRCQCPAGYTGPLCE). In terms of domain architecture, EGF-like 5 spans 197–234 (PAVPCAPSPCRNGGTCRQSGDLTYDCACLPGFEGQNCE). The EGF-like 6; calcium-binding domain maps to 236–272 (NVDDCPGHRCLNGGTCVDGVNTYNCQCPPEWTGQFCT). The EGF-like 7 domain maps to 274–312 (DVDECQLQPNACHNGGTCFNTLGGHSCVCVNGWTGESCS). The 37-residue stretch at 314-350 (NIDDCATAVCFHGATCHDRVASFYCACPMGKTGLLCH) folds into the EGF-like 8; calcium-binding domain. One can recognise an EGF-like 9 domain in the interval 351–389 (LDDACVSNPCHEDAICDTNPVNGRAICTCPPGFTGGACD). In terms of domain architecture, EGF-like 10; calcium-binding spans 391–429 (DVDECSIGANPCEHLGRCVNTQGSFLCQCGRGYTGPRCE). The 37-residue stretch at 431–467 (DVNECLSGPCRNQATCLDRIGQFTCICMAGFTGTYCE) folds into the EGF-like 11; calcium-binding domain. The EGF-like 12; calcium-binding domain occupies 469 to 505 (DIDECQSSPCVNGGVCKDRVNGFSCTCPSGFSGSTCQ). The EGF-like 13; calcium-binding domain maps to 507–543 (DVDECASTPCRNGAKCVDQPDGYECRCAEGFEGTLCD). In terms of domain architecture, EGF-like 14; calcium-binding spans 545–580 (NVDDCSPDPCHHGRCVDGIASFSCACAPGYTGTRCE). Residues 582–618 (QVDECRSQPCRHGGKCLDLVDKYLCRCPSGTTGVNCE) enclose the EGF-like 15; calcium-binding domain. Residues 620–655 (NIDDCASNPCTFGVCRDGINRYDCVCQPGFTGPLCN) enclose the EGF-like 16; calcium-binding domain. One can recognise an EGF-like 17; calcium-binding domain in the interval 657–693 (EINECASSPCGEGGSCVDGENGFRCLCPPGSLPPLCL). 3 consecutive EGF-like domains span residues 695-730 (PSHP…PRCS), 734-770 (ARDA…RQCE), and 771-808 (LLSP…PRCQ). Residues 810–847 (DVDECAGPAPCGPHGICTNLAGSFSCTCHGGYTGPSCD) form the EGF-like 21; calcium-binding domain. Positions 849 to 885 (DINDCDPNPCLNGGSCQDGVGSFSCSCLPGFAGPRCA) constitute an EGF-like 22; calcium-binding domain. One can recognise an EGF-like 23; calcium-binding domain in the interval 887 to 922 (DVDECLSNPCGPGTCTDHVASFTCTCPPGYGGFHCE). 5 EGF-like domains span residues 924–960 (DLPD…AHCQ), 962–998 (EADP…PQCQ), 1000–1034 (LVDW…RLCD), 1036–1082 (RSLP…SHCE), and 1084–1120 (EVDP…DNCE). The region spanning 1122–1158 (DVDECASQPCQHGGSCIDLVARYLCSCPPGTLGVLCE) is the EGF-like 29; calcium-binding domain. Residues 1160 to 1203 (NEDDCGPGPPLDSGPRCLHNGTCVDLVGGFRCTCPPGYTGLRCE) enclose the EGF-like 30; calcium-binding domain. Asparagine 1179 carries N-linked (GlcNAc...) asparagine glycosylation. 4 consecutive EGF-like domains span residues 1205 to 1244 (DINE…PRCQ), 1246 to 1287 (VLSP…PRCE), 1289 to 1325 (VARS…PSCR), and 1335 to 1373 (SNAS…PRCE). The N-linked (GlcNAc...) asparagine glycan is linked to asparagine 1336. 12 disulfides stabilise this stretch: cysteine 1339–cysteine 1350, cysteine 1344–cysteine 1361, cysteine 1363–cysteine 1372, cysteine 1387–cysteine 1410, cysteine 1392–cysteine 1405, cysteine 1401–cysteine 1417, cysteine 1428–cysteine 1451, cysteine 1433–cysteine 1446, cysteine 1442–cysteine 1458, cysteine 1467–cysteine 1493, cysteine 1475–cysteine 1488, and cysteine 1484–cysteine 1500. LNR repeat units lie at residues 1387-1427 (CPRA…PWRQ), 1428-1458 (CEAL…NFDC), and 1467-1505 (CNPV…SEVP). A glycan (N-linked (GlcNAc...) asparagine) is linked at asparagine 1438. Residues 1644–1664 (LPLLVAGAVLLLVILVLGVMV) traverse the membrane as a helical segment. At 1665–2321 (ARRKREHSTL…EVTPKRQVLA (657 aa)) the chain is on the cytoplasmic side. 5 ANK repeats span residues 1838–1867 (TGET…DTNA), 1871–1901 (SGRT…DLDA), 1905–1934 (DGST…DVNA), 1938–1967 (LGKS…NKDM), and 1971–2000 (KEET…NREI). Positions 2024-2120 (LDQPSGPRSP…FGGPPASPGG (97 aa)) are disordered. Low complexity predominate over residues 2039–2053 (LGPLLCPPGAFLPGL). The residue at position 2174 (arginine 2174) is an Omega-N-methylarginine. The disordered stretch occupies residues 2190–2321 (APGPQLLNPG…EVTPKRQVLA (132 aa)). The segment covering 2269 to 2289 (STPSPATATGAMATTTGALPA) has biased composition (low complexity). Residues 2296–2308 (VPSSLAQAQTQLG) show a composition bias toward polar residues.

The protein belongs to the NOTCH family. In terms of assembly, heterodimer of a C-terminal fragment N(TM) and a N-terminal fragment N(EC) which are probably linked by disulfide bonds. Interacts with MAML1, MAML2 and MAML3 which act as transcriptional coactivators for NOTCH3. Interacts with PSMA1. Interacts with HIF1AN. Post-translationally, synthesized in the endoplasmic reticulum as an inactive form which is proteolytically cleaved by a furin-like convertase in the trans-Golgi network before it reaches the plasma membrane to yield an active, ligand-accessible form. Cleavage results in a C-terminal fragment N(TM) and a N-terminal fragment N(EC). Following ligand binding, it is cleaved by TNF-alpha converting enzyme (TACE) to yield a membrane-associated intermediate fragment called notch extracellular truncation (NEXT). This fragment is then cleaved by presenilin dependent gamma-secretase to release a notch-derived peptide containing the intracellular domain (NICD) from the membrane. In terms of processing, phosphorylated. Hydroxylated by HIF1AN. Ubiquitously expressed in fetal and adult tissues.

The protein localises to the cell membrane. Its subcellular location is the nucleus. Functionally, functions as a receptor for membrane-bound ligands Jagged1, Jagged2 and Delta1 to regulate cell-fate determination. Upon ligand activation through the released notch intracellular domain (NICD) it forms a transcriptional activator complex with RBPJ/RBPSUH and activates genes of the enhancer of split locus. Affects the implementation of differentiation, proliferation and apoptotic programs. This chain is Neurogenic locus notch homolog protein 3 (NOTCH3), found in Homo sapiens (Human).